Consider the following 24-residue polypeptide: Brevinin-1Pc (24 aa).

The cysteines at positions 18 and 24 are disulfide-linked.

As to expression, expressed by the skin glands.

Its subcellular location is the secreted. Functionally, antibacterial activity against Gram-positive bacterium S.aureus and Gram-negative bacterium E.coli. Has activity against C.albicans. This is Brevinin-1Pc from Lithobates pipiens (Northern leopard frog).